The primary structure comprises 248 residues: 4-hydroxy-tetrahydrodipicolinate reductase (248 aa).

NAD(+) contacts are provided by residues 9 to 14 (GAKGRV), 77 to 79 (GTT), and 104 to 107 (APNF). His-134 functions as the Proton donor/acceptor in the catalytic mechanism. Position 135 (His-135) interacts with (S)-2,3,4,5-tetrahydrodipicolinate. Lys-138 functions as the Proton donor in the catalytic mechanism. 144–145 (GT) contributes to the (S)-2,3,4,5-tetrahydrodipicolinate binding site.

It belongs to the DapB family.

Its subcellular location is the cytoplasm. It catalyses the reaction (S)-2,3,4,5-tetrahydrodipicolinate + NAD(+) + H2O = (2S,4S)-4-hydroxy-2,3,4,5-tetrahydrodipicolinate + NADH + H(+). The catalysed reaction is (S)-2,3,4,5-tetrahydrodipicolinate + NADP(+) + H2O = (2S,4S)-4-hydroxy-2,3,4,5-tetrahydrodipicolinate + NADPH + H(+). It functions in the pathway amino-acid biosynthesis; L-lysine biosynthesis via DAP pathway; (S)-tetrahydrodipicolinate from L-aspartate: step 4/4. In terms of biological role, catalyzes the conversion of 4-hydroxy-tetrahydrodipicolinate (HTPA) to tetrahydrodipicolinate. The sequence is that of 4-hydroxy-tetrahydrodipicolinate reductase from Corynebacterium glutamicum (strain R).